Reading from the N-terminus, the 356-residue chain is MASTVPSTMKAWQFSSASPTIEANLKLNNNAPLPDGANNLGPDQVLVKVIAAGLNPVDFKFAEIPWLGRLIVGSPSTPGMDFAGRVVATGPNTKSVAVEDLKPGQLVFGRLDSPSKFGTLAEYTIAPRKGCVAIPPGARVIETACVASVGLTAYQSIVYRLKDHTGKRIFLNGGSGGCGTFGIQIAKQMGCHVTTSCSTPNVDLCRSLGADTVIDYKKTDVIAELKKMQPFDLVVDNVGVPTDLYWAAPSFTNPGAPYVQVGALAVTPGFILGNFFKARWPGWLGGGKRPWEFMHIESNVQDYEQLGRWMQEGKLRAVVDEVFGMQDDGPVKAYQKLRTGRAKGKIIVKIDETWED.

NADP(+) is bound by residues 57 to 60 (VDFK), 175 to 178 (SGGC), 198 to 201 (STPN), Tyr216, 261 to 262 (VG), and 342 to 343 (AK).

Belongs to the zinc-containing alcohol dehydrogenase family.

FAD-linked oxidoreductase; part of the gene cluster that mediates the biosynthesis of pleosporalin A, ascomycone A, as well as a third cryptic naphthoquinone derived pigment, all responsible for the coloration of conidia. The pathway begins with the biosynthesis of the cyclized heptaketide 3-acetonyl-1,6,8-trihydroxy-2-naphthaldehyde by the NR-PKS pgmA. The C-6 hydroxyl group is further methylated by the O-methyltransferase pgmB to yield fusarubinaldehyde which is in turn oxidized by the cytochrome P450 monooxygenase pgmC at C-9. The C-1 hydroxyl group is then methylated spontaneously. Although pgmE, pgmD and pgmH are essential for the production of pleosporalin A, it is not the case for the 2 other final products and it remains difficult to assign a specific function to each enzyme. PgmF and pgmG seem not to be involved in pigment biosynthesis although they were regulated by the cluster-specific transcription factor pgmR. This chain is Trans-enoyl reductase pgmF, found in Aspergillus terreus.